A 1083-amino-acid chain; its full sequence is DNA primase (1083 aa).

Residues 1022–1061 (CLRYPHRGGRTAPRTFVSLRVDHHNRLCISLAQQCFATKC) form a CHC2-type zinc finger.

Belongs to the herpesviridae DNA primase family. As to quaternary structure, associates with the helicase and the primase-associated factor to form the helicase-primase factor.

Its subcellular location is the host nucleus. Functionally, essential component of the helicase/primase complex. Unwinds the DNA at the replication forks and generates single-stranded DNA for both leading and lagging strand synthesis. The primase initiates primer synthesis and thereby produces large amount of short RNA primers on the lagging strand that the polymerase elongates using dNTPs. This is DNA primase from Varicella-zoster virus (strain Oka vaccine) (HHV-3).